The primary structure comprises 632 residues: MAKIKKRGESGAAKNYVTRNQALKKLQISLSDFRRLCILKGIYPREPLNKKRANKGSSAPASFYYHKDIQYLLHEPLLVKFREHKAFAKKLARAIGRQEWGLAKNLEDAKPVARLDHLVRERYPTFTLALQDLQDPLNLVHLFSTLPTNPIPGKTLVPSEVIAECSRLISEWKLWAIRTHSLRKMFLGIKGVYYECEVPGQGGEPVRVRWLEGFEFQQHVPHDVDFRILLTFLDLYRTMVGFVLFKLYTDENLVYPPPLDVELDEQGESVGAFKLVERKAAEGADGKTQVSKKAVRKAIKGIKAAGDDADVDMDEGAKETDEEEDEDFVERPSKAQEVDDVASAPLTTYNSLLATSSTPARQNLLFSPYTFYLSRETSSRTWEFVVRAMGGKVITSLTAPTPADAPNADSITHVIIDRPITVERMREMEAGRKWVWIQPQWVADCVNKQKIISSEGYGPGQLLPPHLSPWDGEGELYRPWLEEQGEKAAEGQEGEEEEEAAEQDEGESEDEEEDGKEEVAAEYPPALLAAAQNPSDASLLHAAELEAETNGVSHSAFRAQLKEATKVHAKKVPASQKEKKGEEDLRKIMMSNKKAKLYEKMQYSNREKAAEKEKLEKKRKAIEKRKAKEAKA.

The interval 306 to 341 (GDDADVDMDEGAKETDEEEDEDFVERPSKAQEVDDV) is disordered. The segment covering 307–328 (DDADVDMDEGAKETDEEEDEDF) has biased composition (acidic residues). The 99-residue stretch at 361–459 (RQNLLFSPYT…KIISSEGYGP (99 aa)) folds into the BRCT domain. 3 disordered regions span residues 485–535 (GEKA…QNPS), 565–585 (TKVH…EEDL), and 601–632 (MQYS…EAKA). Residues 492 to 516 (QEGEEEEEAAEQDEGESEDEEEDGK) show a composition bias toward acidic residues. Residues 521–531 (AEYPPALLAAA) show a composition bias toward low complexity. Basic and acidic residues-rich tracts occupy residues 576–585 (QKEKKGEEDL) and 605–616 (NREKAAEKEKLE). Positions 595–632 (AKLYEKMQYSNREKAAEKEKLEKKRKAIEKRKAKEAKA) form a coiled coil.

It belongs to the pescadillo family. In terms of assembly, component of the NOP7 complex, composed of ERB1, NOP7 and YTM1. The complex is held together by ERB1, which interacts with NOP7 via its N-terminal domain and with YTM1 via a high-affinity interaction between the seven-bladed beta-propeller domains of the 2 proteins. The NOP7 complex associates with the 66S pre-ribosome.

It localises to the nucleus. The protein localises to the nucleolus. The protein resides in the nucleoplasm. Functionally, component of the NOP7 complex, which is required for maturation of the 25S and 5.8S ribosomal RNAs and formation of the 60S ribosome. This Cryptococcus neoformans var. neoformans serotype D (strain B-3501A) (Filobasidiella neoformans) protein is Pescadillo homolog.